Here is a 327-residue protein sequence, read N- to C-terminus: Golgi to ER traffic protein 4 homolog (327 aa).

Ala2 is subject to N-acetylalanine. The residue at position 12 (Ser12) is a Phosphoserine. Residues 195–271 (FVAQAVLQFL…YQPSLRRDPM (77 aa)) are interacts with BAG6. A disordered region spans residues 307–327 (GSSEQEDGEESPSDGSPIELD).

The protein belongs to the GET4 family. Component of the BAG6/BAT3 complex, at least composed of BAG6, UBL4A and GET4/TRC35. Interacts with BAG6; the interaction is direct and localizes BAG6 to the cytosol. Interacts with GET3. In terms of processing, ubiquitinated by RNF12, leading to proteasomal degradation. When unassembled from BAG6; ubiquitinylation is modulated by BAG6 quality control role and effectuated by RNF126.

The protein resides in the cytoplasm. It is found in the cytosol. In terms of biological role, as part of a cytosolic protein quality control complex, the BAG6/BAT3 complex, maintains misfolded and hydrophobic patches-containing proteins in a soluble state and participates in their proper delivery to the endoplasmic reticulum or alternatively can promote their sorting to the proteasome where they undergo degradation. The BAG6/BAT3 complex is involved in the post-translational delivery of tail-anchored/type II transmembrane proteins to the endoplasmic reticulum membrane. Recruited to ribosomes, it interacts with the transmembrane region of newly synthesized tail-anchored proteins and together with SGTA and ASNA1 mediates their delivery to the endoplasmic reticulum. Client proteins that cannot be properly delivered to the endoplasmic reticulum are ubiquitinated and sorted to the proteasome. Similarly, the BAG6/BAT3 complex also functions as a sorting platform for proteins of the secretory pathway that are mislocalized to the cytosol either delivering them to the proteasome for degradation or to the endoplasmic reticulum. The BAG6/BAT3 complex also plays a role in the endoplasmic reticulum-associated degradation (ERAD), a quality control mechanism that eliminates unwanted proteins of the endoplasmic reticulum through their retrotranslocation to the cytosol and their targeting to the proteasome. It maintains these retrotranslocated proteins in an unfolded yet soluble state condition in the cytosol to ensure their proper delivery to the proteasome. This is Golgi to ER traffic protein 4 homolog from Homo sapiens (Human).